The sequence spans 142 residues: Small ribosomal subunit protein uS8c (142 aa).

The protein belongs to the universal ribosomal protein uS8 family. In terms of assembly, part of the 30S ribosomal subunit.

It localises to the plastid. Functionally, one of the primary rRNA binding proteins, it binds directly to 16S rRNA central domain where it helps coordinate assembly of the platform of the 30S subunit. The chain is Small ribosomal subunit protein uS8c (rps8) from Euglena longa (Euglenophycean alga).